Here is a 569-residue protein sequence, read N- to C-terminus: uncharacterized protein (569 aa).

An N-terminal signal peptide occupies residues M1–A22. A disordered region spans residues R498–G541. The span at S505–S540 shows a compositional bias: low complexity.

The protein localises to the secreted. It is found in the cell surface. This is an uncharacterized protein from Schizosaccharomyces pombe (strain 972 / ATCC 24843) (Fission yeast).